The sequence spans 473 residues: MFS transporter prlG (473 aa).

Residues 1-12 are compositionally biased toward basic and acidic residues; that stretch reads MSSTDAEAKNEE. Residues 1 to 27 are disordered; it reads MSSTDAEAKNEEAVDWEGPDDPENPRN. The segment covering 13–22 has biased composition (acidic residues); that stretch reads AVDWEGPDDP. 11 helical membrane passes run 37–57, 71–91, 101–121, 125–145, 163–183, 191–211, 266–286, 305–325, 345–365, 372–392, and 409–429; these read VLLV…FAPG, IVAS…PFLL, LIIY…CALS, AMFL…MAIG, ALFG…GGFV, WTFW…LVLM, PIVF…YLLF, GLAY…FAVL, LILM…YGWS, WIVP…ILMP, and ALAA…LAGP.

It belongs to the major facilitator superfamily.

It is found in the cell membrane. In terms of biological role, efflux pump that might be required for efficient secretion of pyrrolocin or other secondary metabolies produced by the pyrrolocin gene cluster. This is MFS transporter prlG from Fungal sp. (strain NRRL 50135).